Here is a 293-residue protein sequence, read N- to C-terminus: Protease HtpX (293 aa).

A run of 2 helical transmembrane segments spans residues 4–24 (IALFLLTNLAVMVVFGLVLSL) and 32–52 (VTGLLIMALLFGFGGSIVSLL). His139 is a binding site for Zn(2+). Glu140 is an active-site residue. Residue His143 coordinates Zn(2+). 2 consecutive transmembrane segments (helical) span residues 158-178 (VVNTFVIFISRIIAQVAAGFL) and 193-213 (LIYFAVATVLELVFGILASII). Glu222 is a Zn(2+) binding site.

The protein belongs to the peptidase M48B family. It depends on Zn(2+) as a cofactor.

It is found in the cell inner membrane. This chain is Protease HtpX, found in Cronobacter sakazakii (strain ATCC BAA-894) (Enterobacter sakazakii).